A 357-amino-acid chain; its full sequence is DNA replication and repair protein RecF (357 aa).

Residue 30–37 (GANGSGKT) coordinates ATP.

Belongs to the RecF family.

The protein resides in the cytoplasm. Functionally, the RecF protein is involved in DNA metabolism; it is required for DNA replication and normal SOS inducibility. RecF binds preferentially to single-stranded, linear DNA. It also seems to bind ATP. The protein is DNA replication and repair protein RecF of Enterobacter sp. (strain 638).